A 287-amino-acid chain; its full sequence is Uroplakin-3a (287 aa).

Positions 1–18 are cleaved as a signal peptide; the sequence is MPPLWALLALGCLRFGSA. Topologically, residues 19-207 are lumenal; the sequence is VNLQPQLASV…DTWPGRRSGG (189 aa). N-linked (GlcNAc...) asparagine glycosylation is found at asparagine 74, asparagine 139, and asparagine 170. Residues 208–235 traverse the membrane as a helical segment; the sequence is MIVITSILGSLPFFLLVGFAGAIALSLV. The Cytoplasmic portion of the chain corresponds to 236–287; sequence DMGSSDGETTHDSQITQEAVPKSLGASESSYTSVNRGPPLDRAEVYSSKLQD. A disordered region spans residues 242-287; that stretch reads GETTHDSQITQEAVPKSLGASESSYTSVNRGPPLDRAEVYSSKLQD. Polar residues predominate over residues 261–270; sequence ASESSYTSVN.

This sequence belongs to the uroplakin-3 family. In terms of assembly, heterodimer with uroplakin-1B (UPK1B). In terms of tissue distribution, expressed in ureter.

Its subcellular location is the endoplasmic reticulum membrane. Functionally, component of the asymmetric unit membrane (AUM); a highly specialized biomembrane elaborated by terminally differentiated urothelial cells. May play an important role in AUM-cytoskeleton interaction in terminally differentiated urothelial cells. It also contributes to the formation of urothelial glycocalyx which may play an important role in preventing bacterial adherence. This Homo sapiens (Human) protein is Uroplakin-3a (UPK3A).